Reading from the N-terminus, the 216-residue chain is Transmembrane protein 139 (216 aa).

A signal peptide spans 1–25; sequence MVPMHLLGRLEKPLLLLCCASFLLG. At 26 to 34 the chain is on the extracellular side; that stretch reads LALLGIKTD. Residues 35 to 55 traverse the membrane as a helical segment; sequence ITPVAYFFLTLGGFFLFAYLL. Residues 56 to 216 are Cytoplasmic-facing; sequence VRFLEWGLRS…VFYEDNWAPP (161 aa). The tract at residues 104–163 is disordered; it reads RPQELDQPPPYSTVVIPPAPEEEQPSHPEGSRRAKLEQRRMASEGSMAQEGSPGRAPINL. Residues 127 to 145 are compositionally biased toward basic and acidic residues; the sequence is QPSHPEGSRRAKLEQRRMA. A phosphoserine mark is found at serine 146 and serine 155.

In terms of assembly, interacts with isoform 2 of SLC4A1.

Its subcellular location is the membrane. Functionally, may be involved in cellular trafficking of proteins such as SLC4A1. The chain is Transmembrane protein 139 (TMEM139) from Homo sapiens (Human).